The primary structure comprises 439 residues: Lactamase-like protein nscB (439 aa).

Zn(2+) is bound by residues His-214, His-216, Asp-218, and His-219. Residue Asp-218 is the Proton donor/acceptor of the active site.

The protein belongs to the metallo-beta-lactamase superfamily. It depends on Zn(2+) as a cofactor.

It participates in secondary metabolite biosynthesis. Lactamase-like protein; part of the gene cluster that mediates the biosynthesis of neosartoricin B, a prenylated anthracenone that probably exhibits T-cell antiproliferative activity, suggestive of a physiological role as an immunosuppressive agent. The non-reducing polyketide synthase nscA probably synthesizes and cyclizes the decaketide backbone. The hydrolase nscB then mediates the product release through hydrolysis followed by spontaneous decarboxylation. The prenyltransferase nscD catalyzes the addition of the dimethylallyl group to the aromatic C5. The FAD-dependent monooxygenase nscC is then responsible for the stereospecific hydroxylation at C2. Neosartoricin B can be converted into two additional compounds neosartoricins C and D. Neosartoricin C is a spirocyclic compound that is cyclized through the attack of C3 hydroxyl on C14, followed by dehydration. On the other hand, neosartoricin D is a further cyclized compound in which attack of C2 on C14 in neosartoricin C results in the formation of the acetal-containing dioxabicyclo-octanone ring. Both of these compounds are novel and possibly represent related metabolites of the gene cluster. The protein is Lactamase-like protein nscB of Arthroderma benhamiae (strain ATCC MYA-4681 / CBS 112371) (Trichophyton mentagrophytes).